A 460-amino-acid chain; its full sequence is ATP synthase subunit beta (460 aa).

ATP is bound at residue 150–157 (GGAGVGKT).

This sequence belongs to the ATPase alpha/beta chains family. F-type ATPases have 2 components, CF(1) - the catalytic core - and CF(0) - the membrane proton channel. CF(1) has five subunits: alpha(3), beta(3), gamma(1), delta(1), epsilon(1). CF(0) has three main subunits: a(1), b(2) and c(9-12). The alpha and beta chains form an alternating ring which encloses part of the gamma chain. CF(1) is attached to CF(0) by a central stalk formed by the gamma and epsilon chains, while a peripheral stalk is formed by the delta and b chains.

The protein localises to the cell inner membrane. The catalysed reaction is ATP + H2O + 4 H(+)(in) = ADP + phosphate + 5 H(+)(out). Produces ATP from ADP in the presence of a proton gradient across the membrane. The catalytic sites are hosted primarily by the beta subunits. This is ATP synthase subunit beta from Erwinia tasmaniensis (strain DSM 17950 / CFBP 7177 / CIP 109463 / NCPPB 4357 / Et1/99).